Reading from the N-terminus, the 541-residue chain is Tegument protein UL21 homolog (541 aa).

Belongs to the alphaherpesvirinae UL21 protein family. As to quaternary structure, interacts (via C-terminus) with UL16.

Its subcellular location is the virion tegument. The protein resides in the host cytoplasm. It localises to the host nucleus. Its function is as follows. May participate in DNA packaging/capsid maturation events. Promotes efficient incorporation of tegument proteins UL46, UL49, and US3 homologs into virions. May also play a role in capsid transport to the trans-Golgi network (TGN). The polypeptide is Tegument protein UL21 homolog (Varicella-zoster virus (strain Oka vaccine) (HHV-3)).